Consider the following 188-residue polypeptide: UPF0301 protein ABO_0112 (188 aa).

This sequence belongs to the UPF0301 (AlgH) family.

The sequence is that of UPF0301 protein ABO_0112 from Alcanivorax borkumensis (strain ATCC 700651 / DSM 11573 / NCIMB 13689 / SK2).